We begin with the raw amino-acid sequence, 220 residues long: N-(5'-phosphoribosyl)anthranilate isomerase (220 aa).

Belongs to the TrpF family.

It catalyses the reaction N-(5-phospho-beta-D-ribosyl)anthranilate = 1-(2-carboxyphenylamino)-1-deoxy-D-ribulose 5-phosphate. The protein operates within amino-acid biosynthesis; L-tryptophan biosynthesis; L-tryptophan from chorismate: step 3/5. This is N-(5'-phosphoribosyl)anthranilate isomerase from Xylella fastidiosa (strain M23).